Here is a 363-residue protein sequence, read N- to C-terminus: Holliday junction branch migration complex subunit RuvB (363 aa).

A disordered region spans residues 1–44 (MAIKRNQGHGLPPKRDPALGRDALTTSQALPEDQEQSANEDRIR). Positions 13-204 (PKRDPALGRD…FGLIQRLRFY (192 aa)) are large ATPase domain (RuvB-L). ATP is bound by residues isoleucine 43, arginine 44, glycine 85, lysine 88, threonine 89, threonine 90, arginine 194, tyrosine 204, and arginine 241. Residue threonine 89 coordinates Mg(2+). The small ATPAse domain (RuvB-S) stretch occupies residues 205–275 (EVDELIAIVH…VAATALDLYN (71 aa)). A head domain (RuvB-H) region spans residues 278–363 (ALGLDWTDRL…EQSTQLDFLP (86 aa)). DNA contacts are provided by arginine 333 and arginine 338.

This sequence belongs to the RuvB family. In terms of assembly, homohexamer. Forms an RuvA(8)-RuvB(12)-Holliday junction (HJ) complex. HJ DNA is sandwiched between 2 RuvA tetramers; dsDNA enters through RuvA and exits via RuvB. An RuvB hexamer assembles on each DNA strand where it exits the tetramer. Each RuvB hexamer is contacted by two RuvA subunits (via domain III) on 2 adjacent RuvB subunits; this complex drives branch migration. In the full resolvosome a probable DNA-RuvA(4)-RuvB(12)-RuvC(2) complex forms which resolves the HJ.

The protein resides in the cytoplasm. The catalysed reaction is ATP + H2O = ADP + phosphate + H(+). In terms of biological role, the RuvA-RuvB-RuvC complex processes Holliday junction (HJ) DNA during genetic recombination and DNA repair, while the RuvA-RuvB complex plays an important role in the rescue of blocked DNA replication forks via replication fork reversal (RFR). RuvA specifically binds to HJ cruciform DNA, conferring on it an open structure. The RuvB hexamer acts as an ATP-dependent pump, pulling dsDNA into and through the RuvAB complex. RuvB forms 2 homohexamers on either side of HJ DNA bound by 1 or 2 RuvA tetramers; 4 subunits per hexamer contact DNA at a time. Coordinated motions by a converter formed by DNA-disengaged RuvB subunits stimulates ATP hydrolysis and nucleotide exchange. Immobilization of the converter enables RuvB to convert the ATP-contained energy into a lever motion, pulling 2 nucleotides of DNA out of the RuvA tetramer per ATP hydrolyzed, thus driving DNA branch migration. The RuvB motors rotate together with the DNA substrate, which together with the progressing nucleotide cycle form the mechanistic basis for DNA recombination by continuous HJ branch migration. Branch migration allows RuvC to scan DNA until it finds its consensus sequence, where it cleaves and resolves cruciform DNA. The protein is Holliday junction branch migration complex subunit RuvB of Picosynechococcus sp. (strain ATCC 27264 / PCC 7002 / PR-6) (Agmenellum quadruplicatum).